We begin with the raw amino-acid sequence, 289 residues long: Caffeoylpyruvate hydrolase (289 aa).

Residues E140, E142, and D171 each contribute to the a divalent metal cation site.

It belongs to the FAH family. In terms of assembly, homodimer. Requires Mg(2+) as cofactor. Mn(2+) serves as cofactor.

It carries out the reaction (E)-caffeoylpyruvate + H2O = (E)-caffeate + pyruvate + H(+). Its pathway is secondary metabolite biosynthesis. Caffeoylpyruvate hydrolase; part of the gene cluster that mediates the fungal bioluminescence cycle. Involved in the recycling of oxyluciferin, a pyruvic acid adduct of caffeic acid, to caffeic acid. The fungal bioluminescence cycle begins with the hispidin synthetase that catalyzes the formation of hispidin which is further hydroxylated by the hispidin-3-hydroxylase, yielding the fungal luciferin 3-hydroxyhispidin. The luciferase then produces an endoperoxide as a high-energy intermediate with decomposition that yields oxyluciferin (also known as caffeoylpyruvate) and light emission. Oxyluciferin can be recycled to caffeic acid by caffeoylpyruvate hydrolase. This chain is Caffeoylpyruvate hydrolase, found in Neonothopanus nambi (Agaricus nambi).